Consider the following 425-residue polypeptide: Melibiose permease (425 aa).

The Cytoplasmic segment spans residues 1–13; sequence MNTTTCTHKDNPN. The helical transmembrane segment at 14 to 34 threads the bilayer; that stretch reads FWIFGLFFFLYFFIMATCFPF. At 35-50 the chain is on the periplasmic side; sequence LPIWLSDIIGLNKTHT. A helical transmembrane segment spans residues 51-71; it reads GIVFSCISLSAIAFQPVLGVI. The Cytoplasmic portion of the chain corresponds to 72–80; it reads SDKLGLKKH. A helical membrane pass occupies residues 81-101; that stretch reads LLWIISVLLFLFAPFFLYVFA. At 102–107 the chain is on the periplasmic side; sequence PLLKTN. The helical transmembrane segment at 108–128 threads the bilayer; the sequence is IWLGALSGGLYIGFVFSAGSG. The Cytoplasmic segment spans residues 129–149; that stretch reads AIEAYIERVSRNSAFEYGKAR. The chain crosses the membrane as a helical span at residues 150 to 170; the sequence is MFGCLGWGLCASTGGILFGID. A topological domain (periplasmic) is located at residue proline 171. The helical transmembrane segment at 172 to 192 threads the bilayer; the sequence is SYVFWMGSAAALLLMLLLVVA. Residues 193-227 are Cytoplasmic-facing; it reads KPKPNQTAQVMNALGANQPQITAKKVFNLFRQRRM. The chain crosses the membrane as a helical span at residues 228–248; sequence WMFILYVIGVACVYDVFDQQF. Residues 249-267 lie on the Periplasmic side of the membrane; that stretch reads ATFFKTFFATPQEGTRAFG. Residues 268-288 traverse the membrane as a helical segment; it reads FATTAGEICNAIIMFCSPWII. The Cytoplasmic portion of the chain corresponds to 289–297; it reads NRIGAKNTL. The chain crosses the membrane as a helical span at residues 298–318; the sequence is LIAGLIMATRIIGSSFATTAV. Over 319-325 the chain is Periplasmic; that stretch reads EVIALKM. Residues 326 to 346 traverse the membrane as a helical segment; it reads LHALEVPFLLVGAFKYITGVF. At 347–353 the chain is on the cytoplasmic side; the sequence is DTRLSAT. A helical transmembrane segment spans residues 354 to 374; it reads IYLIGFQFAKQSAAIFLSAFA. At 375–385 the chain is on the periplasmic side; the sequence is GNMYDRIGFQE. The helical transmembrane segment at 386-406 threads the bilayer; sequence TYLMLGCFVLAITVVSAFTLS. The Cytoplasmic segment spans residues 407-425; the sequence is SRQEIAAAAGAAALTSQSR.

Belongs to the major facilitator superfamily. Oligosaccharide:H(+) symporter (OHS) (TC 2.A.1.5) family.

The protein resides in the cell inner membrane. Its function is as follows. Responsible for transport of melibiose into the cell, with the concomitant import of a proton (symport system). Can also transport lactose, and has weak activity with maltose. Cannot transport the analog methyl-1-thio-beta,D-galactopyranoside (TMG). This chain is Melibiose permease, found in Enterobacter cloacae subsp. cloacae (strain ATCC 13047 / DSM 30054 / NBRC 13535 / NCTC 10005 / WDCM 00083 / NCDC 279-56).